A 281-amino-acid polypeptide reads, in one-letter code: 2,3,4,5-tetrahydropyridine-2,6-dicarboxylate N-succinyltransferase (281 aa).

The substrate site is built by R108 and D145.

This sequence belongs to the transferase hexapeptide repeat family. Homotrimer.

The protein localises to the cytoplasm. The enzyme catalyses (S)-2,3,4,5-tetrahydrodipicolinate + succinyl-CoA + H2O = (S)-2-succinylamino-6-oxoheptanedioate + CoA. Its pathway is amino-acid biosynthesis; L-lysine biosynthesis via DAP pathway; LL-2,6-diaminopimelate from (S)-tetrahydrodipicolinate (succinylase route): step 1/3. The sequence is that of 2,3,4,5-tetrahydropyridine-2,6-dicarboxylate N-succinyltransferase from Parvibaculum lavamentivorans (strain DS-1 / DSM 13023 / NCIMB 13966).